Consider the following 43-residue polypeptide: ORF7b protein (43 aa).

Residues 9 to 29 form a helical membrane-spanning segment; the sequence is FYLCFLAFLLFLVLIMLIIFW.

Its subcellular location is the host Golgi apparatus membrane. The protein localises to the host endosome membrane. This Homo sapiens (Human) protein is ORF7b protein.